Consider the following 85-residue polypeptide: Makatoxin-3 (85 aa).

The N-terminal stretch at 1–19 is a signal peptide; sequence MNYLIVISFALLLMTGVES. In terms of domain architecture, LCN-type CS-alpha/beta spans 21-83; it reads RDAYIAKKEN…VPIRIPGPCI (63 aa). 4 disulfides stabilise this stretch: Cys-31-Cys-82, Cys-35-Cys-55, Cys-41-Cys-65, and Cys-45-Cys-67.

The protein belongs to the long (4 C-C) scorpion toxin superfamily. Sodium channel inhibitor family. Alpha subfamily. In terms of tissue distribution, expressed by the venom gland.

It localises to the secreted. In terms of biological role, this protein markedly relaxes the rat carbachol-precontracted anococcygeus muscle. This relaxation is inhibited by the inhibitor of nitric oxide (NO) synthase, N-nitro-L-arginine methyl ester (L-NAME), suggesting that the response induced by this protein is NO-mediated. The chain is Makatoxin-3 from Olivierus martensii (Manchurian scorpion).